The primary structure comprises 402 residues: Nicotinate phosphoribosyltransferase (402 aa).

Histidine 224 is modified (phosphohistidine; by autocatalysis).

It belongs to the NAPRTase family. In terms of processing, transiently phosphorylated on a His residue during the reaction cycle. Phosphorylation strongly increases the affinity for substrates and increases the rate of nicotinate D-ribonucleotide production. Dephosphorylation regenerates the low-affinity form of the enzyme, leading to product release.

The enzyme catalyses nicotinate + 5-phospho-alpha-D-ribose 1-diphosphate + ATP + H2O = nicotinate beta-D-ribonucleotide + ADP + phosphate + diphosphate. It participates in cofactor biosynthesis; NAD(+) biosynthesis; nicotinate D-ribonucleotide from nicotinate: step 1/1. Catalyzes the synthesis of beta-nicotinate D-ribonucleotide from nicotinate and 5-phospho-D-ribose 1-phosphate at the expense of ATP. This is Nicotinate phosphoribosyltransferase from Neisseria meningitidis serogroup C (strain 053442).